The primary structure comprises 187 residues: Frequenin-1 (187 aa).

The N-myristoyl glycine moiety is linked to residue Gly-2. EF-hand domains follow at residues 24-59, 60-95, 96-131, and 143-178; these read EKEI…FPQG, DPSK…TSKG, NLDE…IYQM, and TPQK…DPRI. Ca(2+) is bound by residues Asp-73, Asn-75, Asp-77, Ser-79, Glu-84, Asp-109, Asp-111, Asp-113, Tyr-115, Glu-120, Asp-156, Asn-158, Asp-160, Lys-162, and Glu-167.

The protein belongs to the recoverin family. In contrast to Frq2, does not interact with ric8a. In terms of tissue distribution, enriched in synapses, such as the motor nerve endings at neuromuscular junctions. In the embryo, highly expressed in the ventral ganglia.

It localises to the cytoplasm. In terms of biological role, ca(2+)-dependent modulation of synaptic efficacy. Also plays a role in axon terminal morphology. The sequence is that of Frequenin-1 (Frq1) from Drosophila melanogaster (Fruit fly).